The primary structure comprises 921 residues: Ubiquitin carboxyl-terminal hydrolase 11 (921 aa).

Residues 1 to 16 (MAAVAADPAAAAVPAS) show a composition bias toward low complexity. The disordered stretch occupies residues 1–29 (MAAVAADPAAAAVPASAEDRETQPEAMPD). Residues 28–133 (PDLDQQWRQI…DQPPIERKVI (106 aa)) form the DUSP domain. Lys194 bears the N6-acetyllysine mark. The USP domain occupies 257–889 (CGLTNLGNTC…AAYVLFYQRQ (633 aa)). Residue Cys266 is the Nucleophile of the active site. Residues 592–697 (TKPTSDDDDG…DRTTSPEEAQ (106 aa)) are disordered. Position 596 is a phosphoserine (Ser596). The segment covering 597 to 624 (DDDDGDEKGDENEDEDVEDDSSSEEEKE) has biased composition (acidic residues). 2 stretches are compositionally biased toward polar residues: residues 657–666 (LDNSLHTSQW) and 676–697 (FTLQ…EEAQ). Ser692 is subject to Phosphoserine. The Proton acceptor role is filled by His847. Positions 893–921 (RRQSQTASSETPTSPASSSTPNSDIMDVN) are disordered. Positions 895–915 (QSQTASSETPTSPASSSTPNS) are enriched in low complexity. Phosphoserine is present on Ser906.

It belongs to the peptidase C19 family. In terms of assembly, monomer. Associated component of the Polycomb group (PcG) multiprotein PRC1-like complex. Interacts with RANBP9/RANBPM. Interacts with BRCA2. Interacts with CHUK/IKKA. Interacts with NFKBIA. Interacts with SPRY3, RAE1, MYCBP2/PAM, and KCTD6.

It is found in the nucleus. Its subcellular location is the cytoplasm. It localises to the chromosome. The catalysed reaction is Thiol-dependent hydrolysis of ester, thioester, amide, peptide and isopeptide bonds formed by the C-terminal Gly of ubiquitin (a 76-residue protein attached to proteins as an intracellular targeting signal).. Protease that can remove conjugated ubiquitin from target proteins and polyubiquitin chains. Inhibits the degradation of target proteins by the proteasome. Cleaves preferentially 'Lys-6' and 'Lys-63'-linked ubiquitin chains. Has lower activity with 'Lys-11' and 'Lys-33'-linked ubiquitin chains, and extremely low activity with 'Lys-27', 'Lys-29' and 'Lys-48'-linked ubiquitin chains (in vitro). Plays a role in the regulation of pathways leading to NF-kappa-B activation. Plays a role in the regulation of DNA repair after double-stranded DNA breaks. Acts as a chromatin regulator via its association with the Polycomb group (PcG) multiprotein PRC1-like complex; may act by deubiquitinating components of the PRC1-like comple. Promotes cell proliferation by deubiquitinating phosphorylated E2F1x. The sequence is that of Ubiquitin carboxyl-terminal hydrolase 11 from Rattus norvegicus (Rat).